We begin with the raw amino-acid sequence, 319 residues long: MKIELSVQPWDPGYSSEGATAQETYTCPKMIEIEQAEAQLSELDLLASMFPGENELIVNDQLAVAELKDCIEKKTMEGRSSKVYFTINMNLDVSEEKMAMFSLACILPFKYPAVLPEITVRSALLSRSQQTQLNTDLTAFLQKHCHGDVCILNATEWVREHASGYVSRDTSSSPTTGNTVQSVDLIFTRLWIYSHHIYNKCKRKNILEWAKELSLSGFSMPGKPGVVCVEGPQSACEEFWSRLRKLNWKRILIRHQEDIPFDGTNDEMERQRKFSIFEEKVFIVNGARGNHMDFGQLYQFLNTKGCGDVFQMFFGVEGQ.

Positions 41–165 constitute an RWD domain; sequence SELDLLASMF…EWVREHASGY (125 aa). S275 carries the phosphoserine modification.

The chain is RWD domain-containing protein 2B (RWDD2B) from Pongo abelii (Sumatran orangutan).